The following is a 393-amino-acid chain: Methylthioribose kinase (393 aa).

Residues Asn-38, Lys-53, and 107–109 (EDL) each bind ATP. Substrate is bound at residue Asp-225. 242–244 (DPE) is an ATP binding site. Residue Arg-332 coordinates substrate.

The protein belongs to the methylthioribose kinase family. As to quaternary structure, homodimer.

The catalysed reaction is 5-(methylsulfanyl)-D-ribose + ATP = 5-(methylsulfanyl)-alpha-D-ribose 1-phosphate + ADP + H(+). It participates in amino-acid biosynthesis; L-methionine biosynthesis via salvage pathway; S-methyl-5-thio-alpha-D-ribose 1-phosphate from S-methyl-5'-thioadenosine (hydrolase route): step 2/2. In terms of biological role, catalyzes the phosphorylation of methylthioribose into methylthioribose-1-phosphate. This Bacillus cereus (strain AH187) protein is Methylthioribose kinase.